The primary structure comprises 335 residues: Large ribosomal subunit protein uL3 (335 aa).

This sequence belongs to the universal ribosomal protein uL3 family. As to quaternary structure, part of the 50S ribosomal subunit. Forms a cluster with proteins L14 and L24e.

One of the primary rRNA binding proteins, it binds directly near the 3'-end of the 23S rRNA, where it nucleates assembly of the 50S subunit. The sequence is that of Large ribosomal subunit protein uL3 from Methanocaldococcus jannaschii (strain ATCC 43067 / DSM 2661 / JAL-1 / JCM 10045 / NBRC 100440) (Methanococcus jannaschii).